Reading from the N-terminus, the 137-residue chain is MQCGLVGKIIKRFEQKGFRLVAMKFLPASEEHLKQHYIDLKDRPFFPGLVKYMNSGPVVAMVWEGLNVVKTGRVMLGETNPADSKPGTIRGDFCIQVGRNIIHGSDSVKSAEKEISLRFKPEELVDYKSCAHDWVYE.

ATP-binding residues include F45, R73, T79, R90, and N100. Catalysis depends on H103, which acts as the Pros-phosphohistidine intermediate.

The protein belongs to the NDK family. Mg(2+) serves as cofactor.

It carries out the reaction a 2'-deoxyribonucleoside 5'-diphosphate + ATP = a 2'-deoxyribonucleoside 5'-triphosphate + ADP. The catalysed reaction is a ribonucleoside 5'-diphosphate + ATP = a ribonucleoside 5'-triphosphate + ADP. Major role in the synthesis of nucleoside triphosphates other than ATP. The ATP gamma phosphate is transferred to the NDP beta phosphate via a ping-pong mechanism, using a phosphorylated active-site intermediate. The chain is Putative nucleoside diphosphate kinase (NME2P1) from Homo sapiens (Human).